Here is a 418-residue protein sequence, read N- to C-terminus: Sterigmatocystin 8-O-methyltransferase (418 aa).

A propeptide spanning residues Met1–Glu41 is cleaved from the precursor. Substrate is bound at residue Met170–Phe176. The segment at Leu206–Met225 is substrate binding. S-adenosyl-L-methionine is bound by residues Gly254–Gly255, Asp277, Asp297–Ile298, and Arg313. His317 functions as the Proton acceptor in the catalytic mechanism.

It belongs to the class I-like SAM-binding methyltransferase superfamily. Cation-independent O-methyltransferase family. COMT subfamily.

The protein resides in the cytoplasm. It is found in the vacuole. It carries out the reaction sterigmatocystin + S-adenosyl-L-methionine = 8-O-methylsterigmatocystin + S-adenosyl-L-homocysteine + H(+). The catalysed reaction is dihydrosterigmatocystin + S-adenosyl-L-methionine = 8-O-methyldihydrosterigmatocystin + S-adenosyl-L-homocysteine + H(+). It participates in mycotoxin biosynthesis; aflatoxin biosynthesis. Its function is as follows. Sterigmatocystin 8-O-methyltransferase; part of the gene cluster that mediates the biosynthesis of aflatoxins, a group of polyketide-derived furanocoumarins, and part of the most toxic and carcinogenic compounds among the known mycotoxins. The four major aflatoxins produced by A.parasiticus are aflatoxin B1 (AFB1), aflatoxin B2 (AFB2), aflatoxin G1 (AFG1) and aflatoxin G2 (AFG2). Within the aflatoxin pathway, the O-methyltransferase aflP uses both sterigmatocystin (ST) and dihydrosterigmatocystin (DHST) as substrates to yield O-methylsterigmatocystin (OMST) and dihydro-O-methylsterigmatocystin (DHOMST), respectively. The biosynthesis of aflatoxins begins with the norsolorinic acid synthase aflC that combines a hexanoyl starter unit produced by the fatty acid synthase aflA/aflB and 7 malonyl-CoA extender units to synthesize the precursor NOR. The second step is the conversion of NOR to averantin and requires the norsolorinic acid ketoreductase aflD, which catalyzes the dehydration of norsolorinic acid to form (1'S)-averantin. The norsolorinic acid reductases aflE and aflF may also play a role in the conversion of NOR to AVN. The cytochrome P450 monooxygenase aflG then catalyzes the hydroxylation of AVN to 5'hydroxyaverantin (HAVN). The next step is performed by the 5'-hydroxyaverantin dehydrogenase aflH that transforms HAVN to 5'-oxoaverantin (OAVN) which is further converted to averufin (AVF) by aflK that plays a dual role in the pathway, as a 5'-oxoaverantin cyclase that mediates conversion of 5'-oxoaverantin, as well as a versicolorin B synthase in a later step in the pathway. The averufin oxidase aflI catalyzes the conversion of AVF to versiconal hemiacetal acetate (VHA). VHA is then the substrate for the versiconal hemiacetal acetate esterase aflJ to yield versiconal (VAL). Versicolorin B synthase aflK then converts VAL to versicolorin B (VERB) by closing the bisfuran ring of aflatoxin which is required for DNA-binding, thus giving to aflatoxin its activity as a mutagen. Then, the activity of the versicolorin B desaturase aflL leads to versicolorin A (VERA). A branch point starts from VERB since it can also be converted to dihydrodemethylsterigmatocystin (DMDHST), probably also by aflL, VERA being a precursor for aflatoxins B1 and G1, and DMDHST for aflatoxins B2 and G2. Next, the versicolorin reductase aflM and the cytochrome P450 monooxygenase aflN are involved in conversion of VERA to demethylsterigmatocystin (DMST). AflX and aflY seem also involved in this step, through probable aflX-mediated epoxide ring-opening step following versicolorin A oxidation and aflY-mediated Baeyer-Villiger oxidation required for the formation of the xanthone ring. The methyltransferase aflO then leads to the modification of DMST to sterigmatocystin (ST), and of DMDHST to dihydrosterigmatocystin (DHST). Both ST and DHST are then substrates of the O-methyltransferase aflP to yield O-methylsterigmatocystin (OMST) and dihydro-O-methylsterigmatocystin (DHOMST), respectively. Finally OMST is converted to aflatoxins B1 and G1, and DHOMST to aflatoxins B2 and G2, via the action of several enzymes including O-methylsterigmatocystin oxidoreductase aflQ, the cytochrome P450 monooxygenase aflU, but also the NADH-dependent flavin oxidoreductase nadA which is specifically required for the synthesis of AFG1. The sequence is that of Sterigmatocystin 8-O-methyltransferase from Aspergillus parasiticus (strain ATCC 56775 / NRRL 5862 / SRRC 143 / SU-1).